We begin with the raw amino-acid sequence, 774 residues long: Transmembrane GTPase fzo-1 (774 aa).

The disordered stretch occupies residues 1 to 29 (MSGTASLVHTLPASGDSNHRGLHSLKNSR). Over 1–617 (MSGTASLVHT…EEQAMMTQMV (617 aa)) the chain is Cytoplasmic. Residues 20–29 (RGLHSLKNSR) are compositionally biased toward basic residues. Residues 51–71 (YGELKDNVAELEGVYKDIKEN) are a coiled coil. The 256-residue stretch at 97-352 (QRDNMKVVFF…TRALEFQNFE (256 aa)) folds into the Dynamin-type G domain. The interval 107–114 (GRTSNGKS) is G1 motif. 110–115 (SNGKST) contacts GTP. The interval 133–134 (TT) is G2 motif. Residues 211-214 (DSPG) form a G3 motif region. 270–273 (NRWD) contacts GTP. A G4 motif region spans residues 270-273 (NRWD). A region of interest (G5 motif) is located at residue E300. S317 is a binding site for GTP. A coiled-coil region spans residues 385–415 (NLNSVLTSAAEQRSKLQNNLNESTRTFNECR). The helical transmembrane segment at 618–638 (LTSAAFLANGSLGVLVVGGIV) threads the bilayer. Residues 639–640 (YK) are Mitochondrial intermembrane-facing. The helical transmembrane segment at 641–661 (AVGWRVIAVGGAAYAGLYAWE) threads the bilayer. Topologically, residues 662–774 (RMRWNSGAKE…YLRSDSPPTP (113 aa)) are cytoplasmic.

This sequence belongs to the TRAFAC class dynamin-like GTPase superfamily. Dynamin/Fzo/YdjA family. Mitofusin subfamily. In terms of assembly, interacts with ced-9; interaction may be suppressed by interaction of ced-9 with egl-1.

It is found in the mitochondrion outer membrane. The enzyme catalyses GTP + H2O = GDP + phosphate + H(+). Its function is as follows. Probable transmembrane GTPase. Mediates mitochondrial fusion. Fusion of mitochondria occurs in many cell types and constitutes an important step in mitochondria morphology, which is balanced between fusion and fission. Dispensable for normal apoptotic processes during embryonic development. The polypeptide is Transmembrane GTPase fzo-1 (Caenorhabditis elegans).